The chain runs to 451 residues: Serine--tRNA ligase (451 aa).

258 to 260 is an L-serine binding site; sequence TSE. Residue 289–291 participates in ATP binding; sequence RSE. An L-serine-binding site is contributed by E312. 376 to 379 provides a ligand contact to ATP; the sequence is EISS. Residue S411 coordinates L-serine.

This sequence belongs to the class-II aminoacyl-tRNA synthetase family. Type-1 seryl-tRNA synthetase subfamily. As to quaternary structure, homodimer. The tRNA molecule binds across the dimer.

It localises to the cytoplasm. It carries out the reaction tRNA(Ser) + L-serine + ATP = L-seryl-tRNA(Ser) + AMP + diphosphate + H(+). The enzyme catalyses tRNA(Sec) + L-serine + ATP = L-seryl-tRNA(Sec) + AMP + diphosphate + H(+). Its pathway is aminoacyl-tRNA biosynthesis; selenocysteinyl-tRNA(Sec) biosynthesis; L-seryl-tRNA(Sec) from L-serine and tRNA(Sec): step 1/1. In terms of biological role, catalyzes the attachment of serine to tRNA(Ser). Is also able to aminoacylate tRNA(Sec) with serine, to form the misacylated tRNA L-seryl-tRNA(Sec), which will be further converted into selenocysteinyl-tRNA(Sec). This chain is Serine--tRNA ligase, found in Bordetella pertussis (strain Tohama I / ATCC BAA-589 / NCTC 13251).